Here is a 302-residue protein sequence, read N- to C-terminus: MLSMLESILLSVATSEAMLGILGNIFIVLVNCTNWVRNKKLSKINFILTGLAISRVFTIWIITLDAYTKVFFLTTLMPSNLHECISYIWVIINHLSVWFATSLSIFYFLKIANFSHYIFLWLKRRADKVFVFLIGYLIITWLASFPLAVTVIKNIKVHHNNTSWLIQLEKRELLINYVFANMGPISLFMVAVFTCFLLTISLWRHRRRMQSTGSKFRDLNTEVHVKAMKVLISFIILFILYFMGVLIETLCLFLTENILLFIFGFTLSSTYPCCHSFILILTSRELKQASMRALQRLKCCET.

The Extracellular portion of the chain corresponds to 1 to 7; the sequence is MLSMLES. A helical transmembrane segment spans residues 8-28; that stretch reads ILLSVATSEAMLGILGNIFIV. The Cytoplasmic segment spans residues 29 to 43; that stretch reads LVNCTNWVRNKKLSK. The chain crosses the membrane as a helical span at residues 44-64; the sequence is INFILTGLAISRVFTIWIITL. Residues 65 to 87 are Extracellular-facing; that stretch reads DAYTKVFFLTTLMPSNLHECISY. Residues 88-108 form a helical membrane-spanning segment; sequence IWVIINHLSVWFATSLSIFYF. The Cytoplasmic segment spans residues 109–128; the sequence is LKIANFSHYIFLWLKRRADK. A helical transmembrane segment spans residues 129–149; sequence VFVFLIGYLIITWLASFPLAV. Topologically, residues 150–182 are extracellular; sequence TVIKNIKVHHNNTSWLIQLEKRELLINYVFANM. N-linked (GlcNAc...) asparagine glycans are attached at residues Asn160 and Asn161. A helical transmembrane segment spans residues 183–203; that stretch reads GPISLFMVAVFTCFLLTISLW. The Cytoplasmic portion of the chain corresponds to 204 to 233; the sequence is RHRRRMQSTGSKFRDLNTEVHVKAMKVLIS. A helical transmembrane segment spans residues 234–254; it reads FIILFILYFMGVLIETLCLFL. Topologically, residues 255 to 257 are extracellular; sequence TEN. A helical transmembrane segment spans residues 258 to 278; it reads ILLFIFGFTLSSTYPCCHSFI. Over 279 to 302 the chain is Cytoplasmic; it reads LILTSRELKQASMRALQRLKCCET.

The protein belongs to the G-protein coupled receptor T2R family.

It localises to the membrane. In terms of biological role, putative taste receptor which may play a role in the perception of bitterness. In Rattus norvegicus (Rat), this protein is Taste receptor type 2 member 104.